Reading from the N-terminus, the 288-residue chain is Pantothenate synthetase (288 aa).

30–37 (MGNLHEGH) lines the ATP pocket. H37 (proton donor) is an active-site residue. Position 61 (Q61) interacts with (R)-pantoate. A beta-alanine-binding site is contributed by Q61. 148-151 (GQKD) contacts ATP. Residue Q154 participates in (R)-pantoate binding. ATP contacts are provided by residues V177 and 185-188 (LSSR).

The protein belongs to the pantothenate synthetase family. As to quaternary structure, homodimer.

Its subcellular location is the cytoplasm. It catalyses the reaction (R)-pantoate + beta-alanine + ATP = (R)-pantothenate + AMP + diphosphate + H(+). It functions in the pathway cofactor biosynthesis; (R)-pantothenate biosynthesis; (R)-pantothenate from (R)-pantoate and beta-alanine: step 1/1. In terms of biological role, catalyzes the condensation of pantoate with beta-alanine in an ATP-dependent reaction via a pantoyl-adenylate intermediate. This is Pantothenate synthetase from Psychrobacter arcticus (strain DSM 17307 / VKM B-2377 / 273-4).